We begin with the raw amino-acid sequence, 333 residues long: Delta-aminolevulinic acid dehydratase (333 aa).

Cysteine 127, cysteine 129, and cysteine 137 together coordinate Zn(2+). Residue lysine 204 is the Schiff-base intermediate with substrate of the active site. 2 residues coordinate 5-aminolevulinate: arginine 214 and arginine 226. The Schiff-base intermediate with substrate role is filled by lysine 257. 5-aminolevulinate-binding residues include serine 283 and tyrosine 322.

Belongs to the ALAD family. Homooctamer. The cofactor is Zn(2+).

The catalysed reaction is 2 5-aminolevulinate = porphobilinogen + 2 H2O + H(+). The protein operates within porphyrin-containing compound metabolism; protoporphyrin-IX biosynthesis; coproporphyrinogen-III from 5-aminolevulinate: step 1/4. Catalyzes an early step in the biosynthesis of tetrapyrroles. Binds two molecules of 5-aminolevulinate per subunit, each at a distinct site, and catalyzes their condensation to form porphobilinogen. The sequence is that of Delta-aminolevulinic acid dehydratase (alad) from Dictyostelium discoideum (Social amoeba).